Here is a 783-residue protein sequence, read N- to C-terminus: BMP/retinoic acid-inducible neural-specific protein 2 (783 aa).

The signal sequence occupies residues 1–33 (MRWQCGTRFRGLRPAVAPWTALLALGLPGWVLA). An MACPF domain is found at 85 to 281 (RYRIYREFAR…FVAAALSYIT (197 aa)). N-linked (GlcNAc...) asparagine glycosylation is found at Asn-185, Asn-354, Asn-473, Asn-579, Asn-626, and Asn-658.

The protein belongs to the BRINP family.

Its subcellular location is the secreted. In terms of biological role, inhibits neuronal cell proliferation by negative regulation of the cell cycle transition. This is BMP/retinoic acid-inducible neural-specific protein 2 (BRINP2) from Homo sapiens (Human).